Reading from the N-terminus, the 511-residue chain is Glucans biosynthesis protein G (511 aa).

Residues 1–22 (MMKMRWLSAAVMLTLYTSSSWA) form the signal peptide.

The protein belongs to the OpgD/OpgG family.

Its subcellular location is the periplasm. It functions in the pathway glycan metabolism; osmoregulated periplasmic glucan (OPG) biosynthesis. Functionally, involved in the biosynthesis of osmoregulated periplasmic glucans (OPGs). The protein is Glucans biosynthesis protein G of Escherichia coli O81 (strain ED1a).